We begin with the raw amino-acid sequence, 314 residues long: Homoserine O-succinyltransferase (314 aa).

Cysteine 142 serves as the catalytic Acyl-thioester intermediate. Residues lysine 163 and serine 192 each contribute to the substrate site. The Proton acceptor role is filled by histidine 235. Residue glutamate 237 is part of the active site. Arginine 249 contributes to the substrate binding site.

It belongs to the MetA family.

It localises to the cytoplasm. The catalysed reaction is L-homoserine + succinyl-CoA = O-succinyl-L-homoserine + CoA. Its pathway is amino-acid biosynthesis; L-methionine biosynthesis via de novo pathway; O-succinyl-L-homoserine from L-homoserine: step 1/1. Transfers a succinyl group from succinyl-CoA to L-homoserine, forming succinyl-L-homoserine. The polypeptide is Homoserine O-succinyltransferase (Shewanella pealeana (strain ATCC 700345 / ANG-SQ1)).